The chain runs to 138 residues: Gap junction alpha-4 protein (138 aa).

The Cytoplasmic segment spans residues 1-16; that stretch reads DWGFLEKLLDQVQEHS. The chain crosses the membrane as a helical span at residues 17 to 39; sequence TVVGKIWLTVLFIFRILILGLAG. The Extracellular segment spans residues 40–74; the sequence is ESVWGDEQSDFECNTAQPGCTNVCYDQAFPISHIP. A helical transmembrane segment spans residues 75 to 97; that stretch reads YWVLQFLFVSTPTLVYLGHVIYL. Topologically, residues 98 to 138 are cytoplasmic; sequence SRREERLRQKEGELRALPDKDPRVERALAGIERQMAKISVA.

The protein belongs to the connexin family. Alpha-type (group II) subfamily. A connexon is composed of a hexamer of connexins.

It is found in the cell membrane. The protein localises to the cell junction. Its subcellular location is the gap junction. In terms of biological role, one gap junction consists of a cluster of closely packed pairs of transmembrane channels, the connexons, through which materials of low MW diffuse from one cell to a neighboring cell. This Sus scrofa (Pig) protein is Gap junction alpha-4 protein (GJA4).